The sequence spans 318 residues: Death effector domain-containing protein (318 aa).

Positions 25-103 (SLHRMFDIVG…RHDLLPYVTL (79 aa)) constitute a DED domain. Residues 128 to 191 (PRALSDPEPR…SVTPDPKEKQ (64 aa)) form a disordered region.

Interacts with CASP8, CASP10, KRT8, KRT18, CASP3 and FADD. Homodimerizes and heterodimerizes with DEDD2. Exists predominantly in a mono- or diubiquitinated form. As to expression, ubiquitously expressed.

The protein resides in the cytoplasm. It is found in the nucleus. The protein localises to the nucleolus. A scaffold protein that directs CASP3 to certain substrates and facilitates their ordered degradation during apoptosis. May also play a role in mediating CASP3 cleavage of KRT18. Regulates degradation of intermediate filaments during apoptosis. May play a role in the general transcription machinery in the nucleus and might be an important regulator of the activity of GTF3C3. Inhibits DNA transcription in vitro. The chain is Death effector domain-containing protein (Dedd) from Mus musculus (Mouse).